Here is a 252-residue protein sequence, read N- to C-terminus: Triosephosphate isomerase (252 aa).

9-11 (NWK) is a binding site for substrate. His-96 acts as the Electrophile in catalysis. Residue Glu-168 is the Proton acceptor of the active site. Substrate-binding positions include Gly-174, Ser-214, and 235-236 (GG).

This sequence belongs to the triosephosphate isomerase family. Homodimer.

Its subcellular location is the cytoplasm. It carries out the reaction D-glyceraldehyde 3-phosphate = dihydroxyacetone phosphate. It functions in the pathway carbohydrate biosynthesis; gluconeogenesis. Its pathway is carbohydrate degradation; glycolysis; D-glyceraldehyde 3-phosphate from glycerone phosphate: step 1/1. Functionally, involved in the gluconeogenesis. Catalyzes stereospecifically the conversion of dihydroxyacetone phosphate (DHAP) to D-glyceraldehyde-3-phosphate (G3P). The protein is Triosephosphate isomerase of Chloroherpeton thalassium (strain ATCC 35110 / GB-78).